The following is a 230-amino-acid chain: Orotate phosphoribosyltransferase (230 aa).

Residues R107, K108, K111, H113, and 133–141 each bind 5-phospho-alpha-D-ribose 1-diphosphate; that span reads EDLTTAGGS. T137 provides a ligand contact to orotate.

It belongs to the purine/pyrimidine phosphoribosyltransferase family. PyrE subfamily. Homodimer. It depends on Mg(2+) as a cofactor.

It carries out the reaction orotidine 5'-phosphate + diphosphate = orotate + 5-phospho-alpha-D-ribose 1-diphosphate. Its pathway is pyrimidine metabolism; UMP biosynthesis via de novo pathway; UMP from orotate: step 1/2. Functionally, catalyzes the transfer of a ribosyl phosphate group from 5-phosphoribose 1-diphosphate to orotate, leading to the formation of orotidine monophosphate (OMP). In Allorhizobium ampelinum (strain ATCC BAA-846 / DSM 112012 / S4) (Agrobacterium vitis (strain S4)), this protein is Orotate phosphoribosyltransferase.